We begin with the raw amino-acid sequence, 97 residues long: Coiled-coil domain-containing protein 167 (97 aa).

Positions 10 to 79 (GVALEIDGLE…LRQENRKNML (70 aa)) form a coiled coil. A helical transmembrane segment spans residues 78-95 (MLLSVAIFILLTLVYAYW).

Its subcellular location is the membrane. This is Coiled-coil domain-containing protein 167 (CCDC167) from Homo sapiens (Human).